Reading from the N-terminus, the 396-residue chain is Tail sheath protein (396 aa).

This sequence belongs to the myoviridae tail sheath protein family. As to quaternary structure, homomultimer.

It is found in the virion. Its subcellular location is the host cytoplasm. Its function is as follows. Polymerizes as an extended helical structure around the baseplate-tail tube complex. During ejection, the sheath shifts to a contracted form, thereby making the inner tail tube protrude through the host cell envelope. This Enterobacteriaceae (Bacteriophage P2) protein is Tail sheath protein (FI).